The sequence spans 431 residues: Acetylornithine aminotransferase (431 aa).

Residues 118-119 (GA) and Phe157 each bind pyridoxal 5'-phosphate. Arg160 is a N(2)-acetyl-L-ornithine binding site. 251-254 (DEVQ) contributes to the pyridoxal 5'-phosphate binding site. Position 284 is an N6-(pyridoxal phosphate)lysine (Lys284). Ser313 lines the N(2)-acetyl-L-ornithine pocket. Thr314 contributes to the pyridoxal 5'-phosphate binding site.

This sequence belongs to the class-III pyridoxal-phosphate-dependent aminotransferase family. ArgD subfamily. Homodimer. Pyridoxal 5'-phosphate serves as cofactor.

It localises to the cytoplasm. The catalysed reaction is N(2)-acetyl-L-ornithine + 2-oxoglutarate = N-acetyl-L-glutamate 5-semialdehyde + L-glutamate. The protein operates within amino-acid biosynthesis; L-arginine biosynthesis; N(2)-acetyl-L-ornithine from L-glutamate: step 4/4. The polypeptide is Acetylornithine aminotransferase (Bifidobacterium longum (strain NCC 2705)).